Here is a 253-residue protein sequence, read N- to C-terminus: Large ribosomal subunit protein uL4 (253 aa).

It belongs to the universal ribosomal protein uL4 family. In terms of assembly, part of the 50S ribosomal subunit.

Functionally, one of the primary rRNA binding proteins, this protein initially binds near the 5'-end of the 23S rRNA. It is important during the early stages of 50S assembly. It makes multiple contacts with different domains of the 23S rRNA in the assembled 50S subunit and ribosome. Forms part of the polypeptide exit tunnel. This is Large ribosomal subunit protein uL4 from Methanococcoides burtonii (strain DSM 6242 / NBRC 107633 / OCM 468 / ACE-M).